The primary structure comprises 396 residues: Probable sugar efflux transporter (396 aa).

The Cytoplasmic portion of the chain corresponds to 1–14 (MTTNTVSRKVAWLR). The chain crosses the membrane as a helical span at residues 15 to 35 (VVTLAVAAFIFNTTEFVPVGL). Residues 36–49 (LSDIAQSFHMQTAQ) are Periplasmic-facing. Residues 50–70 (VGIMLTIYAWVVALMSLPFML) form a helical membrane-spanning segment. The Cytoplasmic segment spans residues 71 to 80 (MTSQVERRKL). A helical transmembrane segment spans residues 81 to 101 (LICLFVVFIASHVLSFLSWSF). Thr-102 is a topological domain (periplasmic). The chain crosses the membrane as a helical span at residues 103-123 (VLVISRIGVAFAHAIFWSITA). Residues 124-135 (SLAIRMAPAGKR) are Cytoplasmic-facing. A helical membrane pass occupies residues 136 to 156 (AQALSLIATGTALAMVLGLPL). Residues 157 to 169 (GRIVGQYFGWRMT) lie on the Periplasmic side of the membrane. Residues 170 to 190 (FFAIGIGALVTLLCLIKLLPL) traverse the membrane as a helical segment. Residues 191-208 (LPSEHSGSLKSLPLLFRR) lie on the Cytoplasmic side of the membrane. A helical transmembrane segment spans residues 209-229 (PALMSIYLLTVVVVTAHYTAY). Over 230–245 (SYIEPFVQNIAGFSAN) the chain is Periplasmic. A helical transmembrane segment spans residues 246 to 266 (FATALLLLLGGAGIIGSVIFG). Over 267 to 274 (KLGNQYAS) the chain is Cytoplasmic. The chain crosses the membrane as a helical span at residues 275 to 295 (ALVSTAIALLLVCLALLLPAA). Topologically, residues 296–298 (NSE) are periplasmic. Residues 299–319 (IHLGVLSIFWGIAMMIIGLGM) traverse the membrane as a helical segment. Topologically, residues 320–332 (QVKVLALAPDATD) are cytoplasmic. A helical membrane pass occupies residues 333-353 (VAMALFSGIFNIGIGAGALVG). Residues 354-363 (NQVSLHWSMS) are Periplasmic-facing. Residues 364-384 (MIGYVGAVPAFAALIWSIIIF) form a helical membrane-spanning segment. Over 385-396 (RRWPVTLEEQTQ) the chain is Cytoplasmic.

It belongs to the major facilitator superfamily. SotB (TC 2.A.1.2) family.

The protein resides in the cell inner membrane. Involved in the efflux of sugars. The physiological role may be the reduction of the intracellular concentration of toxic sugars or sugar metabolites. The polypeptide is Probable sugar efflux transporter (Shigella flexneri).